We begin with the raw amino-acid sequence, 127 residues long: Protein SPIRAL1-like 4 (127 aa).

The disordered stretch occupies residues 1–127; sequence MGKARGVNSG…FGSGPCGSDK (127 aa). The segment covering 39–48 has biased composition (low complexity); the sequence is TTTTTTTTTT. Serine 80 is modified (phosphoserine). The span at 80–94 shows a compositional bias: polar residues; sequence SPNNYYRSDGQNCGN.

It belongs to the SPIRAL1 family. Ubiquitous.

Acts redundantly with SPR1 in maintaining the cortical microtubules organization essential for anisotropic cell growth. The chain is Protein SPIRAL1-like 4 (SP1L4) from Arabidopsis thaliana (Mouse-ear cress).